The following is a 306-amino-acid chain: Dermonecrotic toxin LarSicTox-alphaIB1ai (306 aa).

Residue valine 1 is a signal peptide. Positions 2–27 are excised as a propeptide; the sequence is RATEKFASMYFFCHSPQSAETDVAER. Residue histidine 38 is part of the active site. 2 residues coordinate Mg(2+): glutamate 58 and aspartate 60. Histidine 74 acts as the Nucleophile in catalysis. 2 cysteine pairs are disulfide-bonded: cysteine 78–cysteine 84 and cysteine 80–cysteine 223. Residue aspartate 118 coordinates Mg(2+). Asparagine 283 carries N-linked (GlcNAc...) asparagine glycosylation.

It belongs to the arthropod phospholipase D family. Class II subfamily. It depends on Mg(2+) as a cofactor. Expressed by the venom gland.

It localises to the secreted. The catalysed reaction is an N-(acyl)-sphingosylphosphocholine = an N-(acyl)-sphingosyl-1,3-cyclic phosphate + choline. It catalyses the reaction an N-(acyl)-sphingosylphosphoethanolamine = an N-(acyl)-sphingosyl-1,3-cyclic phosphate + ethanolamine. It carries out the reaction a 1-acyl-sn-glycero-3-phosphocholine = a 1-acyl-sn-glycero-2,3-cyclic phosphate + choline. The enzyme catalyses a 1-acyl-sn-glycero-3-phosphoethanolamine = a 1-acyl-sn-glycero-2,3-cyclic phosphate + ethanolamine. Dermonecrotic toxins cleave the phosphodiester linkage between the phosphate and headgroup of certain phospholipids (sphingolipid and lysolipid substrates), forming an alcohol (often choline) and a cyclic phosphate. This toxin acts on sphingomyelin (SM). It may also act on ceramide phosphoethanolamine (CPE), lysophosphatidylcholine (LPC) and lysophosphatidylethanolamine (LPE), but not on lysophosphatidylserine (LPS), and lysophosphatidylglycerol (LPG). It acts by transphosphatidylation, releasing exclusively cyclic phosphate products as second products. Induces dermonecrosis, hemolysis, increased vascular permeability, edema, inflammatory response, and platelet aggregation. This Loxosceles arizonica (Arizona brown spider) protein is Dermonecrotic toxin LarSicTox-alphaIB1ai.